The following is a 314-amino-acid chain: Acetyl-coenzyme A carboxylase carboxyl transferase subunit alpha (314 aa).

Positions 32–289 (EIDMLEASLE…KSAFVAQLDS (258 aa)) constitute a CoA carboxyltransferase C-terminal domain.

Belongs to the AccA family. Acetyl-CoA carboxylase is a heterohexamer composed of biotin carboxyl carrier protein (AccB), biotin carboxylase (AccC) and two subunits each of ACCase subunit alpha (AccA) and ACCase subunit beta (AccD).

It is found in the cytoplasm. It carries out the reaction N(6)-carboxybiotinyl-L-lysyl-[protein] + acetyl-CoA = N(6)-biotinyl-L-lysyl-[protein] + malonyl-CoA. It functions in the pathway lipid metabolism; malonyl-CoA biosynthesis; malonyl-CoA from acetyl-CoA: step 1/1. In terms of biological role, component of the acetyl coenzyme A carboxylase (ACC) complex. First, biotin carboxylase catalyzes the carboxylation of biotin on its carrier protein (BCCP) and then the CO(2) group is transferred by the carboxyltransferase to acetyl-CoA to form malonyl-CoA. This chain is Acetyl-coenzyme A carboxylase carboxyl transferase subunit alpha, found in Staphylococcus aureus (strain JH9).